The chain runs to 249 residues: DNA polymerase sliding clamp (249 aa).

This sequence belongs to the PCNA family. In terms of assembly, homotrimer. The subunits circularize to form a toroid; DNA passes through its center. Replication factor C (RFC) is required to load the toroid on the DNA.

Sliding clamp subunit that acts as a moving platform for DNA processing. Responsible for tethering the catalytic subunit of DNA polymerase and other proteins to DNA during high-speed replication. This Pyrococcus horikoshii (strain ATCC 700860 / DSM 12428 / JCM 9974 / NBRC 100139 / OT-3) protein is DNA polymerase sliding clamp.